We begin with the raw amino-acid sequence, 210 residues long: Thiamine-phosphate synthase (210 aa).

Residues 39–43 and asparagine 71 contribute to the 4-amino-2-methyl-5-(diphosphooxymethyl)pyrimidine site; that span reads QLREK. Aspartate 72 and aspartate 91 together coordinate Mg(2+). Serine 110 provides a ligand contact to 4-amino-2-methyl-5-(diphosphooxymethyl)pyrimidine. 134–136 lines the 2-[(2R,5Z)-2-carboxy-4-methylthiazol-5(2H)-ylidene]ethyl phosphate pocket; it reads TPT. Lysine 137 lines the 4-amino-2-methyl-5-(diphosphooxymethyl)pyrimidine pocket. Glycine 163 is a binding site for 2-[(2R,5Z)-2-carboxy-4-methylthiazol-5(2H)-ylidene]ethyl phosphate.

It belongs to the thiamine-phosphate synthase family. Mg(2+) serves as cofactor.

It carries out the reaction 2-[(2R,5Z)-2-carboxy-4-methylthiazol-5(2H)-ylidene]ethyl phosphate + 4-amino-2-methyl-5-(diphosphooxymethyl)pyrimidine + 2 H(+) = thiamine phosphate + CO2 + diphosphate. It catalyses the reaction 2-(2-carboxy-4-methylthiazol-5-yl)ethyl phosphate + 4-amino-2-methyl-5-(diphosphooxymethyl)pyrimidine + 2 H(+) = thiamine phosphate + CO2 + diphosphate. The enzyme catalyses 4-methyl-5-(2-phosphooxyethyl)-thiazole + 4-amino-2-methyl-5-(diphosphooxymethyl)pyrimidine + H(+) = thiamine phosphate + diphosphate. It participates in cofactor biosynthesis; thiamine diphosphate biosynthesis; thiamine phosphate from 4-amino-2-methyl-5-diphosphomethylpyrimidine and 4-methyl-5-(2-phosphoethyl)-thiazole: step 1/1. Condenses 4-methyl-5-(beta-hydroxyethyl)thiazole monophosphate (THZ-P) and 2-methyl-4-amino-5-hydroxymethyl pyrimidine pyrophosphate (HMP-PP) to form thiamine monophosphate (TMP). This is Thiamine-phosphate synthase from Campylobacter jejuni (strain RM1221).